The sequence spans 90 residues: MGLPGGWELVLIVGVLVLLFGATKLPQMARSLGQSARVFKAEARGMKEDEEAAKREKQAKSEPQQLTAGESSAPTVASPVEETQRNDSKK.

Residues 1-21 (MGLPGGWELVLIVGVLVLLFG) traverse the membrane as a helical segment. Positions 42–60 (EARGMKEDEEAAKREKQAK) are enriched in basic and acidic residues. Residues 42 to 90 (EARGMKEDEEAAKREKQAKSEPQQLTAGESSAPTVASPVEETQRNDSKK) are disordered. Residues 61–75 (SEPQQLTAGESSAPT) are compositionally biased toward polar residues.

Belongs to the TatA/E family. As to quaternary structure, the Tat system comprises two distinct complexes: a TatABC complex, containing multiple copies of TatA, TatB and TatC subunits, and a separate TatA complex, containing only TatA subunits. Substrates initially bind to the TatABC complex, which probably triggers association of the separate TatA complex to form the active translocon.

Its subcellular location is the cell membrane. In terms of biological role, part of the twin-arginine translocation (Tat) system that transports large folded proteins containing a characteristic twin-arginine motif in their signal peptide across membranes. TatA could form the protein-conducting channel of the Tat system. The chain is Sec-independent protein translocase protein TatA from Saccharopolyspora erythraea (strain ATCC 11635 / DSM 40517 / JCM 4748 / NBRC 13426 / NCIMB 8594 / NRRL 2338).